The primary structure comprises 283 residues: Elongation factor Ts (283 aa).

An involved in Mg(2+) ion dislocation from EF-Tu region spans residues 80-83 (TDFV).

It belongs to the EF-Ts family.

Its subcellular location is the cytoplasm. Its function is as follows. Associates with the EF-Tu.GDP complex and induces the exchange of GDP to GTP. It remains bound to the aminoacyl-tRNA.EF-Tu.GTP complex up to the GTP hydrolysis stage on the ribosome. In Histophilus somni (strain 129Pt) (Haemophilus somnus), this protein is Elongation factor Ts.